A 328-amino-acid polypeptide reads, in one-letter code: MFGRTLFPARVIALGSGLFRTPLRTLAAGPALSIGGIYPPIATPFTDKEEVDYGKLHENLQNYSSFPFRGFVVQGSNGEYAYLTREERLEVVRRVRQAVPKEKLIMAGSGCESTQATIEMTVEMAQSGADAVLVVTPSYYRGKMTSSALVHHYTKVADHSPVPVVLYSVPANTGLDLPVDAVVTLSQHPNIIGLKDSGGDITRIGLIIHKTKHLGFQVLSGSAGFLLAGYSVGAVGGVCALANVLGAQVCELERLCLNGRWQEAKELQYRLIEPNTAVTRKFGIPGLKQAMEWFGFNGGKCRSPLLPLTEQEIKELRHIFTVNGWLSL.

The N-terminal 26 residues, 1–26, are a transit peptide targeting the mitochondrion; the sequence is MFGRTLFPARVIALGSGLFRTPLRTL. 76–77 lines the substrate pocket; that stretch reads SN. Lysine 195 functions as the Schiff-base intermediate with substrate in the catalytic mechanism. The substrate site is built by serine 197 and glycine 221.

It belongs to the DapA family. As to quaternary structure, homotetramer.

The protein localises to the mitochondrion. It carries out the reaction (4S)-4-hydroxy-2-oxoglutarate = glyoxylate + pyruvate. The catalysed reaction is (4R)-4-hydroxy-2-oxoglutarate = glyoxylate + pyruvate. Inhibited by divalent cations. Its function is as follows. Catalyzes the final step in the metabolic pathway of hydroxyproline. This Xenopus tropicalis (Western clawed frog) protein is 4-hydroxy-2-oxoglutarate aldolase, mitochondrial (hoga1).